The chain runs to 107 residues: Prepilin peptidase-dependent protein C (107 aa).

Residues 1 to 10 (MSASLKNQQG) constitute a propeptide that is removed on maturation. N-methylphenylalanine is present on Phe11. A helical transmembrane segment spans residues 11 to 30 (FSLPEVMLAMVLMVMIVTAL).

Its subcellular location is the membrane. Not yet known. In Escherichia coli (strain K12), this protein is Prepilin peptidase-dependent protein C (ppdC).